We begin with the raw amino-acid sequence, 315 residues long: Phosphate transport system permease protein PstC (315 aa).

At 1-22 (MLTKSRKYFNQTWIESLFKQTT) the chain is on the cytoplasmic side. The chain crosses the membrane as a helical span at residues 23–43 (ALFALLVFILLAAILISLVIG). Over 44–77 (SWESIKRFGGSFLLETYWDPVQEQYGAIIPILGT) the chain is Periplasmic. The 229-residue stretch at 74–302 (ILGTLITAGI…VITTMVLILS (229 aa)) folds into the ABC transmembrane type-1 domain. The helical transmembrane segment at 78-98 (LITAGIALFIAVPISFGIAIF) threads the bilayer. The Cytoplasmic portion of the chain corresponds to 99 to 117 (LTELAPNWLKRPISIAIEM). The chain crosses the membrane as a helical span at residues 118 to 138 (LAAIPSIIYGMWGLFVFVPLF). Residues 139-164 (QEHIQPVLIDNLGNLPGLELFFSGVP) lie on the Periplasmic side of the membrane. Residues 165 to 185 (FGVGLFTAGLVLAIMIIPFIA) form a helical membrane-spanning segment. Residues 186–223 (SVMRDVFSIVPPMLKEGAYGLGATTWEVVRQVIVPHTR) lie on the Cytoplasmic side of the membrane. A helical transmembrane segment spans residues 224–244 (IGLVGSVMLGLGRALGETMAI). The Periplasmic segment spans residues 245–281 (TFIIGNSFQLPNSLFSPSTSIASAIANEFNEAGGLQK). A helical transmembrane segment spans residues 282–302 (SALMELGLLLFVITTMVLILS). The Cytoplasmic segment spans residues 303 to 315 (RLMITKMQQTKGK).

Belongs to the binding-protein-dependent transport system permease family. CysTW subfamily.

It localises to the cell inner membrane. Its function is as follows. Part of the binding-protein-dependent transport system for phosphate; probably responsible for the translocation of the substrate across the membrane. The protein is Phosphate transport system permease protein PstC (pstC) of Haemophilus influenzae (strain ATCC 51907 / DSM 11121 / KW20 / Rd).